Consider the following 154-residue polypeptide: Myoglobin (154 aa).

The Globin domain occupies 2-148 (VLSDGEWQLV…FRKDIAAKYK (147 aa)). Phosphoserine is present on serine 4. Histidine 65 provides a ligand contact to nitrite. Histidine 65 serves as a coordination point for O2. A Phosphothreonine modification is found at threonine 68. Histidine 94 provides a ligand contact to heme b.

The protein belongs to the globin family. As to quaternary structure, monomeric.

Its subcellular location is the cytoplasm. It localises to the sarcoplasm. The catalysed reaction is Fe(III)-heme b-[protein] + nitric oxide + H2O = Fe(II)-heme b-[protein] + nitrite + 2 H(+). It carries out the reaction H2O2 + AH2 = A + 2 H2O. Functionally, monomeric heme protein which primary function is to store oxygen and facilitate its diffusion within muscle tissues. Reversibly binds oxygen through a pentacoordinated heme iron and enables its timely and efficient release as needed during periods of heightened demand. Depending on the oxidative conditions of tissues and cells, and in addition to its ability to bind oxygen, it also has a nitrite reductase activity whereby it regulates the production of bioactive nitric oxide. Under stress conditions, like hypoxia and anoxia, it also protects cells against reactive oxygen species thanks to its pseudoperoxidase activity. The chain is Myoglobin from Balaena mysticetus (Bowhead whale).